Consider the following 236-residue polypeptide: MADS-box transcription factor 3 (236 aa).

The MADS-box domain occupies 1-61 (MGRGKIEIKR…GRLYEYANNS (61 aa)). In terms of domain architecture, K-box spans 87–178 (AQHYQQESSK…RSKVVENERG (92 aa)).

In terms of tissue distribution, expressed in lemmas, paleas and lodicules.

It localises to the nucleus. Probable transcription factor involved in the development of floral organs. Acts as C-class protein in association with MADS58. Involved in the control of lodicule number (whorl 2), stamen specification (whorl 3) and floral meristem determinacy (whorl 4), but not in the regulation of carpel morphogenesis. Plays a more predominant role in controlling lodicule development and in specifying stamen identity than MADS58. The sequence is that of MADS-box transcription factor 3 (MADS3) from Oryza sativa subsp. japonica (Rice).